The primary structure comprises 378 residues: Tyrosinase-like protein phomQ1' (378 aa).

The chain crosses the membrane as a helical span at residues 42–62 (TIIVVSVITFAAIIGCWVFLS). Cu cation contacts are provided by H130 and H139. Residue N209 is glycosylated (N-linked (GlcNAc...) asparagine). Cu cation contacts are provided by H279 and H305.

This sequence belongs to the tyrosinase family. The cofactor is Cu(2+).

It is found in the membrane. It participates in mycotoxin biosynthesis. Tyrosinase-like protein; part of the gene cluster that mediates the biosynthesis of the phomopsins, a group of hexapeptide mycotoxins which infects lupins and causes lupinosis disease in livestock. The pathway starts with the processing of the precursor phomA' by several endopeptidases including kexin proteases as well as the cluster-specific S41 family peptidase phomP1 and the oligopeptidase phomG' to produce 10 identical copies of the hexapeptide Tyr-Val-Ile-Pro-Ile-Asp. After being excised from the precursor peptide, the core peptides are cyclized and modified post-translationally by enzymes encoded within the gene cluster. The timing and order of proteolysis of the phomA' precursor and PTMs are still unknown. Two tyrosinase-like enzymes, phomQ1' and phomQ2, catalyze the chlorination and hydroxylation of Tyr, respectively. PhomYb, is proposed to be involved in the construction of the macrocyclic structure. The other 4 ustYa family proteins may be involved in PTMs that generate the unique structure of phomopsin A. PhomYa' is required for the hydroxylation of C-beta of Tyr. PhomYc', phomYd', and phomYe are responsible for the biosynthesis of 2,3-dehydroisoleucine (dIle), 2,3-dehydroaspartic acid (dAsp), and 3,4-dehydroproline (dPro), respectively. While dIle formation by phomYc' is indispensable for the installation of dAsp by phomYd', the order of the other PTMs have not been elucidated yet. Most of the biosynthetic enzymes likely have broad substrate specificity, and thus, there might be a metabolic grid from a precursor to phomopsin A. The enzyme(s) responsible for the biosynthesis of 3,4-dehydrovaline (dVal) have also not been identified yet. Finally, phomM' acts as an S-adenosylmethionine-dependent alpha-N-methyltransferase that catalyzes two successive N-methylation reactions, converting N-desmethyl-phomopsin A to phomopsin A and phomopsin A further to an N,N-dimethylated congener called phomopsin E. The polypeptide is Tyrosinase-like protein phomQ1' (Diaporthe leptostromiformis (Lupinosis disease fungus)).